Reading from the N-terminus, the 490-residue chain is Aspartyl/glutamyl-tRNA(Asn/Gln) amidotransferase subunit B (490 aa).

It belongs to the GatB/GatE family. GatB subfamily. In terms of assembly, heterotrimer of A, B and C subunits.

The catalysed reaction is L-glutamyl-tRNA(Gln) + L-glutamine + ATP + H2O = L-glutaminyl-tRNA(Gln) + L-glutamate + ADP + phosphate + H(+). It carries out the reaction L-aspartyl-tRNA(Asn) + L-glutamine + ATP + H2O = L-asparaginyl-tRNA(Asn) + L-glutamate + ADP + phosphate + 2 H(+). Functionally, allows the formation of correctly charged Asn-tRNA(Asn) or Gln-tRNA(Gln) through the transamidation of misacylated Asp-tRNA(Asn) or Glu-tRNA(Gln) in organisms which lack either or both of asparaginyl-tRNA or glutaminyl-tRNA synthetases. The reaction takes place in the presence of glutamine and ATP through an activated phospho-Asp-tRNA(Asn) or phospho-Glu-tRNA(Gln). This is Aspartyl/glutamyl-tRNA(Asn/Gln) amidotransferase subunit B from Symbiobacterium thermophilum (strain DSM 24528 / JCM 14929 / IAM 14863 / T).